The sequence spans 438 residues: Serine hydroxymethyltransferase (438 aa).

(6S)-5,6,7,8-tetrahydrofolate contacts are provided by residues Leu-133 and 137-139 (GHL). Lys-242 is subject to N6-(pyridoxal phosphate)lysine.

It belongs to the SHMT family. Homodimer. Pyridoxal 5'-phosphate serves as cofactor.

The protein localises to the cytoplasm. The catalysed reaction is (6R)-5,10-methylene-5,6,7,8-tetrahydrofolate + glycine + H2O = (6S)-5,6,7,8-tetrahydrofolate + L-serine. It participates in one-carbon metabolism; tetrahydrofolate interconversion. The protein operates within amino-acid biosynthesis; glycine biosynthesis; glycine from L-serine: step 1/1. Its function is as follows. Catalyzes the reversible interconversion of serine and glycine with tetrahydrofolate (THF) serving as the one-carbon carrier. This reaction serves as the major source of one-carbon groups required for the biosynthesis of purines, thymidylate, methionine, and other important biomolecules. Also exhibits THF-independent aldolase activity toward beta-hydroxyamino acids, producing glycine and aldehydes, via a retro-aldol mechanism. This chain is Serine hydroxymethyltransferase, found in Brucella abortus (strain S19).